Consider the following 31-residue polypeptide: Photosystem II reaction center protein T (31 aa).

Residues 3-23 (ALVYVFLLVGTLMVIFFAIFF) form a helical membrane-spanning segment.

It belongs to the PsbT family. In terms of assembly, PSII is composed of 1 copy each of membrane proteins PsbA, PsbB, PsbC, PsbD, PsbE, PsbF, PsbH, PsbI, PsbJ, PsbK, PsbL, PsbM, PsbT, PsbX, PsbY, PsbZ, Psb30/Ycf12, at least 3 peripheral proteins of the oxygen-evolving complex and a large number of cofactors. It forms dimeric complexes.

The protein localises to the plastid. It localises to the chloroplast thylakoid membrane. Found at the monomer-monomer interface of the photosystem II (PS II) dimer, plays a role in assembly and dimerization of PSII. PSII is a light-driven water plastoquinone oxidoreductase, using light energy to abstract electrons from H(2)O, generating a proton gradient subsequently used for ATP formation. This Gracilaria tenuistipitata var. liui (Red alga) protein is Photosystem II reaction center protein T.